A 427-amino-acid polypeptide reads, in one-letter code: Serine--tRNA ligase (427 aa).

231-233 serves as a coordination point for L-serine; the sequence is TAE. Residue 262–264 participates in ATP binding; it reads RSE. Glu-285 is an L-serine binding site. An ATP-binding site is contributed by 349-352; the sequence is EISS. Position 385 (Ser-385) interacts with L-serine.

It belongs to the class-II aminoacyl-tRNA synthetase family. Type-1 seryl-tRNA synthetase subfamily. In terms of assembly, homodimer. The tRNA molecule binds across the dimer.

Its subcellular location is the cytoplasm. The enzyme catalyses tRNA(Ser) + L-serine + ATP = L-seryl-tRNA(Ser) + AMP + diphosphate + H(+). It carries out the reaction tRNA(Sec) + L-serine + ATP = L-seryl-tRNA(Sec) + AMP + diphosphate + H(+). Its pathway is aminoacyl-tRNA biosynthesis; selenocysteinyl-tRNA(Sec) biosynthesis; L-seryl-tRNA(Sec) from L-serine and tRNA(Sec): step 1/1. Functionally, catalyzes the attachment of serine to tRNA(Ser). Is also able to aminoacylate tRNA(Sec) with serine, to form the misacylated tRNA L-seryl-tRNA(Sec), which will be further converted into selenocysteinyl-tRNA(Sec). This is Serine--tRNA ligase from Brucella abortus (strain S19).